A 618-amino-acid polypeptide reads, in one-letter code: ELMO domain-containing protein C (618 aa).

The stretch at 1–72 forms a coiled coil; it reads MERYRIRRER…EELRLQGDRF (72 aa). Disordered stretches follow at residues 153–175 and 245–276; these read NFDN…KPSL and TTTT…STTV. Low complexity-rich tracts occupy residues 156–171 and 245–275; these read NNNN…NNGN and TTTT…SSTT. The region spanning 382–545 is the ELMO domain; sequence DHEEYLKHLW…KLKSQLNEIS (164 aa). 2 stretches are compositionally biased toward low complexity: residues 574 to 592 and 602 to 618; these read QQQQ…PSSP and TTTS…TQNN. Residues 574–618 form a disordered region; sequence QQQQQLQQQQQSLPLPSSPRSFLNNYQQTTTSSTSISPSKNTQNN.

This is ELMO domain-containing protein C (elmoC) from Dictyostelium discoideum (Social amoeba).